The sequence spans 88 residues: U2-ctenitoxin-Pn1a (88 aa).

An N-terminal signal peptide occupies residues 1–17 (MKVAILILSILVLAVAS). Positions 18–34 (ETIEEYRDDFAVEELER) are excised as a propeptide. Cystine bridges form between cysteine 37-cysteine 51, cysteine 44-cysteine 57, cysteine 48-cysteine 86, cysteine 50-cysteine 71, and cysteine 59-cysteine 69. A propeptide is located at residue lysine 88.

In terms of tissue distribution, expressed by the venom gland.

The protein localises to the secreted. In terms of biological role, inhibits voltage-gated sodium channels (Nav). Causes scratching, lacrimation, hypersalivation, sweating and agitation followed by spastic paralysis of the anterior and posterior extremities and death at dose levels of 1.62 mg/mouse. Insecticidal to the larval and adult forms of the house fly. The protein is U2-ctenitoxin-Pn1a of Phoneutria nigriventer (Brazilian armed spider).